Consider the following 500-residue polypeptide: Lysine--tRNA ligase (500 aa).

Residues Glu-402 and Glu-409 each coordinate Mg(2+).

It belongs to the class-II aminoacyl-tRNA synthetase family. In terms of assembly, homodimer. It depends on Mg(2+) as a cofactor.

The protein resides in the cytoplasm. The catalysed reaction is tRNA(Lys) + L-lysine + ATP = L-lysyl-tRNA(Lys) + AMP + diphosphate. In Buchnera aphidicola subsp. Baizongia pistaciae (strain Bp), this protein is Lysine--tRNA ligase.